A 1894-amino-acid chain; its full sequence is Plexin-A2 (1894 aa).

The signal sequence occupies residues Met1–Gly34. The Sema domain maps to Met35–Val508. Residues Met35–Pro1237 are Extracellular-facing. N-linked (GlcNAc...) asparagine glycans are attached at residues Asn76 and Asn91. 10 cysteine pairs are disulfide-bonded: Cys94/Cys103, Cys129/Cys137, Cys284/Cys405, Cys300/Cys356, Cys374/Cys393, Cys511/Cys528, Cys517/Cys559, Cys520/Cys537, Cys531/Cys543, and Cys594/Cys613. Residue Asn327 is glycosylated (N-linked (GlcNAc...) asparagine). Residues Asn598, Asn696, and Asn756 are each glycosylated (N-linked (GlcNAc...) asparagine). IPT/TIG domains are found at residues Pro858–Phe951, Pro954–Tyr1037, Pro1041–Tyr1139, and Pro1143–Val1228. Residue Asn1205 is glycosylated (N-linked (GlcNAc...) asparagine). A helical membrane pass occupies residues Ala1238–Ile1258. The Cytoplasmic portion of the chain corresponds to Ala1259 to Ser1894. The stretch at Lys1261 to Ser1310 forms a coiled coil. Phosphoserine is present on Ser1612.

The protein belongs to the plexin family. As to quaternary structure, homodimer. The PLXNA2 homodimer interacts with a SEMA6A homodimer, giving rise to a heterotetramer. Interacts directly with NRP1 and NRP2. Interacts with RND1. Detected in fetal brain.

It localises to the cell membrane. Functionally, coreceptor for SEMA3A and SEMA6A. Necessary for signaling by SEMA6A and class 3 semaphorins and subsequent remodeling of the cytoskeleton. Plays a role in axon guidance, invasive growth and cell migration. Class 3 semaphorins bind to a complex composed of a neuropilin and a plexin. The plexin modulates the affinity of the complex for specific semaphorins, and its cytoplasmic domain is required for the activation of down-stream signaling events in the cytoplasm. The chain is Plexin-A2 (PLXNA2) from Homo sapiens (Human).